Consider the following 545-residue polypeptide: uncharacterized protein (545 aa).

2 disordered regions span residues 1-162 and 200-250; these read MSSG…DPQE and YPPV…EPPP. A compositionally biased stretch (polar residues) spans 86–100; it reads NYRSHSSADYLTPNS. 2 stretches are compositionally biased toward low complexity: residues 109–128 and 141–152; these read TTPR…TATK and SGASTSSGTSST. 2 stretches are compositionally biased toward polar residues: residues 212–221 and 228–244; these read SSRTGTLQRT and ISST…QMQS. The PDZ domain occupies 458-540; it reads RVLVEKMMPG…VTITLLPAVG (83 aa).

This is an uncharacterized protein from Caenorhabditis elegans.